The following is a 335-amino-acid chain: Olfactory receptor 10R2 (335 aa).

Over 1-45 (MPQILIFTYLNMFYFFPPLQILAENLTMVTEFLLLGFSSLGEIQL) the chain is Extracellular. Asparagine 25 carries an N-linked (GlcNAc...) asparagine glycan. Residues 46–66 (ALFVVFLFLYLVILSGNVTII) traverse the membrane as a helical segment. At 67 to 74 (SVIHLDKS) the chain is on the cytoplasmic side. A helical membrane pass occupies residues 75-95 (LHTPMYFFLGILSTSETFYTF). Topologically, residues 96–119 (VILPKMLINLLSVARTISFNCCAL) are extracellular. A disulfide bridge links cysteine 117 with cysteine 209. Residues 120–140 (QMFFFLGFAITNCLLLGVMGY) form a helical membrane-spanning segment. At 141–159 (DRYAAICHPLHYPTLMSWQ) the chain is on the cytoplasmic side. The chain crosses the membrane as a helical span at residues 160–180 (VCGKLAAACAIGGFLASLTVV). The Extracellular portion of the chain corresponds to 181 to 217 (NLVFSLPFCSANKVNHYFCDISAVILLACTNTDVNEF). The helical transmembrane segment at 218-237 (VIFICGVLVLVVPFLFICVS) threads the bilayer. Residues 238–257 (YLCILRTILKIPSAEGRRKA) are Cytoplasmic-facing. Residues 258-278 (FSTCASHLSVVIVHYGCASFI) form a helical membrane-spanning segment. Over 279-291 (YLRPTANYVSNKD) the chain is Extracellular. Residues 292 to 312 (RLVTVTYTIVTPLLNPMVYSL) traverse the membrane as a helical segment. The Cytoplasmic portion of the chain corresponds to 313–335 (RNKDVQLAIRKVLGKKGSLKLYN).

Belongs to the G-protein coupled receptor 1 family.

Its subcellular location is the cell membrane. In terms of biological role, odorant receptor. This is Olfactory receptor 10R2 (OR10R2) from Homo sapiens (Human).